The primary structure comprises 355 residues: tRNA-specific 2-thiouridylase MnmA 1 (355 aa).

6-13 (LLSGGVDS) is a binding site for ATP. The tract at residues 92 to 94 (NPD) is interaction with target base in tRNA. Cys-97 functions as the Nucleophile in the catalytic mechanism. A disulfide bond links Cys-97 and Cys-192. Gly-120 contacts ATP. The interaction with tRNA stretch occupies residues 142 to 144 (KDQ). Cys-192 (cysteine persulfide intermediate) is an active-site residue.

This sequence belongs to the MnmA/TRMU family.

The protein resides in the cytoplasm. It carries out the reaction S-sulfanyl-L-cysteinyl-[protein] + uridine(34) in tRNA + AH2 + ATP = 2-thiouridine(34) in tRNA + L-cysteinyl-[protein] + A + AMP + diphosphate + H(+). Catalyzes the 2-thiolation of uridine at the wobble position (U34) of tRNA, leading to the formation of s(2)U34. The polypeptide is tRNA-specific 2-thiouridylase MnmA 1 (Bacteroides thetaiotaomicron (strain ATCC 29148 / DSM 2079 / JCM 5827 / CCUG 10774 / NCTC 10582 / VPI-5482 / E50)).